A 442-amino-acid polypeptide reads, in one-letter code: UDP-N-acetylmuramate--L-alanine ligase (442 aa).

ATP is bound at residue 109-115; that stretch reads GAHGKTS.

The protein belongs to the MurCDEF family.

The protein localises to the cytoplasm. It carries out the reaction UDP-N-acetyl-alpha-D-muramate + L-alanine + ATP = UDP-N-acetyl-alpha-D-muramoyl-L-alanine + ADP + phosphate + H(+). It functions in the pathway cell wall biogenesis; peptidoglycan biosynthesis. In terms of biological role, cell wall formation. This chain is UDP-N-acetylmuramate--L-alanine ligase, found in Streptococcus pyogenes serotype M3 (strain SSI-1).